Reading from the N-terminus, the 611-residue chain is Putative type II restriction enzyme HgiDII (611 aa).

A compositionally biased stretch (basic and acidic residues) spans 355 to 364 (YPSNPKKEEV). Positions 355-434 (YPSNPKKEEV…PEPSPPPKQE (80 aa)) are disordered. Low complexity predominate over residues 381-409 (TNASSDSSTATENASSDSSTATENASSET). 2 consecutive repeat copies span residues 382 to 392 (NASSDSSTATE) and 393 to 403 (NASSDSSTATE). Residues 382-403 (NASSDSSTATENASSDSSTATE) are 2.5 X 11 AA tandem repeats. The 3; truncated repeat unit spans residues 404-409 (NASSET). A compositionally biased stretch (acidic residues) spans 410-425 (NDGEVEDNSFFDDDIP).

It carries out the reaction Endonucleolytic cleavage of DNA to give specific double-stranded fragments with terminal 5'-phosphates.. Its function is as follows. According to REBASE this is a P subtype restriction enzyme that recognizes the double-stranded sequence 5'-GTCGAC-3' and cleaves after G-1. No restriction activity was detected upon overexpressing this protein in E.coli. The protein is Putative type II restriction enzyme HgiDII of Herpetosiphon aurantiacus (Herpetosiphon giganteus).